The sequence spans 225 residues: UPF0758 protein SZO_09140 (225 aa).

Residues 102–224 (PVLSSAQVAE…YYSFREKSDL (123 aa)) enclose the MPN domain. The Zn(2+) site is built by histidine 173, histidine 175, and aspartate 186. The JAMM motif signature appears at 173–186 (HNHPSGLTKPSAND).

Belongs to the UPF0758 family.

The chain is UPF0758 protein SZO_09140 from Streptococcus equi subsp. zooepidemicus (strain H70).